The chain runs to 68 residues: uncharacterized protein (68 aa).

The HMA domain maps to 2 to 67 (KTITLNIKGI…VIEDAGFDAT (66 aa)). A metal cation contacts are provided by Cys13 and Cys16.

This is an uncharacterized protein from Haemophilus influenzae (strain ATCC 51907 / DSM 11121 / KW20 / Rd).